Here is a 565-residue protein sequence, read N- to C-terminus: Laccase-12 (565 aa).

The N-terminal stretch at 1–24 (MTTVHTFSILLFFCSLFSASLIIA) is a signal peptide. Plastocyanin-like domains follow at residues 32-148 (VIQE…PTPG) and 158-310 (RQTA…YKKT). N-linked (GlcNAc...) asparagine glycosylation occurs at Asn78. His82, His84, His127, and His129 together coordinate Cu cation. 8 N-linked (GlcNAc...) asparagine glycosylation sites follow: Asn187, Asn203, Asn298, Asn325, Asn377, Asn387, Asn395, and Asn428. Positions 413–549 (DFPSKPPVKF…AMAFLVDNGV (137 aa)) constitute a Plastocyanin-like 3 domain. His466, His469, His471, His528, Cys529, His530, and His534 together coordinate Cu cation.

Belongs to the multicopper oxidase family. Cu cation is required as a cofactor. As to expression, predominantly expressed in the inflorescence stem.

Its subcellular location is the secreted. It is found in the extracellular space. It localises to the apoplast. It catalyses the reaction 4 hydroquinone + O2 = 4 benzosemiquinone + 2 H2O. Lignin degradation and detoxification of lignin-derived products. The chain is Laccase-12 (LAC12) from Arabidopsis thaliana (Mouse-ear cress).